Reading from the N-terminus, the 208-residue chain is MDTFKQISGRIAPMLEPNIDTDVIMPKQFLKGIDRQGLDKGVFFDRRFMAGGQPNPDFILNMPGWQSATFLLVGPNFGCGSSREHAVWGLKQLGVRGLIGSTFAGIFDDNCQRNGILTVSLDEPALARLAQLAASADTNSITVSLDRCEITTAEETISFVISELKRAMLAAGEDAIAWTLQYLPEIENFEVAHYSRRPWLKRPASPRG.

This sequence belongs to the LeuD family. LeuD type 1 subfamily. In terms of assembly, heterodimer of LeuC and LeuD.

The catalysed reaction is (2R,3S)-3-isopropylmalate = (2S)-2-isopropylmalate. Its pathway is amino-acid biosynthesis; L-leucine biosynthesis; L-leucine from 3-methyl-2-oxobutanoate: step 2/4. Functionally, catalyzes the isomerization between 2-isopropylmalate and 3-isopropylmalate, via the formation of 2-isopropylmaleate. This is 3-isopropylmalate dehydratase small subunit 2 (leuD2) from Salmonella typhimurium (strain LT2 / SGSC1412 / ATCC 700720).